The following is a 165-amino-acid chain: Polcalcin Cup a 4 (165 aa).

4 EF-hand domains span residues Gln-22–Glu-57, Val-58–Leu-86, Ala-91–Pro-126, and Cys-127–Asp-162. Positions 35, 37, 39, 41, 46, 71, 73, 75, 77, 82, 104, 106, 108, 110, 115, 140, 142, 144, and 151 each coordinate Ca(2+).

As to quaternary structure, may exist as monomer and dimer. Expressed in mature pollen grains.

This chain is Polcalcin Cup a 4, found in Hesperocyparis arizonica (Arizona cypress).